The sequence spans 125 residues: uncharacterized protein (125 aa).

This is an uncharacterized protein from Homo sapiens (Human).